The following is a 298-amino-acid chain: Transcription factor RHD6 (298 aa).

Disordered regions lie at residues 1–58 and 157–213; these read MALV…SDHQ and TGSR…AKNR. Residues 15-27 show a composition bias toward low complexity; sequence SKQNSSSSEDLSS. Polar residues-rich tracts occupy residues 157–168 and 177–190; these read TGSRNESLSPKS and GEST…SSGV. The segment covering 191-205 has biased composition (low complexity); that stretch reads TGKTKPKPTTSPKDP. A basic motif region spans residues 201–214; it reads SPKDPQSLAAKNRR. A bHLH domain is found at 201–250; sequence SPKDPQSLAAKNRRERISERLKILQELVPNGTKVDLVTMLEKAISYVKFL. The helix-loop-helix motif stretch occupies residues 215-250; it reads ERISERLKILQELVPNGTKVDLVTMLEKAISYVKFL.

As to quaternary structure, homodimer. Forms heterodimers with RSL1. Interacts with TIFY10B/JAZ2, TIFY6A/JAZ4, TIFY5A/JAZ8, TIFY7/JAZ9 and TIFY9/JAZ10. As to expression, expressed constitutively in flowers. Expressed in root epidermal hair cells.

The protein resides in the nucleus. In terms of biological role, transcription factor that is specifically required for the development of root hairs. Acts with RSL1 to positively regulate root hair development. Acts downstream of genes that regulate epidermal pattern formation, such as GL2. Targets directly RSL4, another transcription factor involved in the regulation of root hair elongation. Acts with RSL1 as transcription factor that integrates a jasmonate (JA) signaling pathway that stimulates root hair growth. The protein is Transcription factor RHD6 of Arabidopsis thaliana (Mouse-ear cress).